We begin with the raw amino-acid sequence, 100 residues long: MHLTPRETEKLMLHYAGELARKRKERGLKLNYPEAVALISAELMEAARDGKTVTELMQYGAKILTRDDVMEGVDAMIHEIQIEATFPDGTKLVTVHNPIR.

This sequence belongs to the urease gamma subunit family. As to quaternary structure, heterotrimer of UreA (gamma), UreB (beta) and UreC (alpha) subunits. Three heterotrimers associate to form the active enzyme.

The protein localises to the cytoplasm. The catalysed reaction is urea + 2 H2O + H(+) = hydrogencarbonate + 2 NH4(+). It functions in the pathway nitrogen metabolism; urea degradation; CO(2) and NH(3) from urea (urease route): step 1/1. The chain is Urease subunit gamma from Acetivibrio thermocellus (strain ATCC 27405 / DSM 1237 / JCM 9322 / NBRC 103400 / NCIMB 10682 / NRRL B-4536 / VPI 7372) (Clostridium thermocellum).